Reading from the N-terminus, the 170-residue chain is Transcription factor E (170 aa).

The HTH TFE/IIEalpha-type domain maps to 1-93; the sequence is MKDAYLYVVE…AWYVDDEIIR (93 aa).

It belongs to the TFE family. Monomer. Interaction with RNA polymerase subunits RpoF and RpoE is necessary for Tfe stimulatory transcription activity. Able to interact with Tbp and RNA polymerase in the absence of DNA promoter. Interacts both with the preinitiation and elongation complexes.

Transcription factor that plays a role in the activation of archaeal genes transcribed by RNA polymerase. Facilitates transcription initiation by enhancing TATA-box recognition by TATA-box-binding protein (Tbp), and transcription factor B (Tfb) and RNA polymerase recruitment. Not absolutely required for transcription in vitro, but particularly important in cases where Tbp or Tfb function is not optimal. It dynamically alters the nucleic acid-binding properties of RNA polymerases by stabilizing the initiation complex and destabilizing elongation complexes. Seems to translocate with the RNA polymerase following initiation and acts by binding to the non template strand of the transcription bubble in elongation complexes. The polypeptide is Transcription factor E (Pyrobaculum arsenaticum (strain DSM 13514 / JCM 11321 / PZ6)).